A 104-amino-acid polypeptide reads, in one-letter code: Nucleoid-associated protein OB0030 (104 aa).

Residues 1–23 are disordered; the sequence is MKGNMNNMMKQMQKMQKKMMQAQ.

It belongs to the YbaB/EbfC family. As to quaternary structure, homodimer.

The protein localises to the cytoplasm. It is found in the nucleoid. Functionally, binds to DNA and alters its conformation. May be involved in regulation of gene expression, nucleoid organization and DNA protection. The polypeptide is Nucleoid-associated protein OB0030 (Oceanobacillus iheyensis (strain DSM 14371 / CIP 107618 / JCM 11309 / KCTC 3954 / HTE831)).